The sequence spans 236 residues: Thymidylate kinase (236 aa).

9 to 16 lines the ATP pocket; the sequence is GPEGSGKS.

The protein belongs to the thymidylate kinase family.

It catalyses the reaction dTMP + ATP = dTDP + ADP. Its function is as follows. Phosphorylation of dTMP to form dTDP in both de novo and salvage pathways of dTTP synthesis. This is Thymidylate kinase from Herpetosiphon aurantiacus (strain ATCC 23779 / DSM 785 / 114-95).